An 817-amino-acid polypeptide reads, in one-letter code: Putative ATP-dependent RNA helicase R350 (817 aa).

The tract at residues 1–29 (MNRRNRSNDLNPEPSIENPNNQIAEEFPG) is disordered. The segment covering 17–29 (ENPNNQIAEEFPG) has biased composition (polar residues). In terms of domain architecture, Helicase ATP-binding spans 93 to 271 (LNPQGPYTSI…ALMFNLLRPG (179 aa)). 106 to 113 (HGLGSGKT) contributes to the ATP binding site. A DEAH box motif is present at residues 206–209 (DEAH). The Helicase C-terminal domain maps to 495–661 (LAIAFMTYIS…STDEYVEDQA (167 aa)).

The protein belongs to the DEAD box helicase family. DEAH subfamily.

The protein localises to the virion. It catalyses the reaction ATP + H2O = ADP + phosphate + H(+). This chain is Putative ATP-dependent RNA helicase R350, found in Acanthamoeba polyphaga mimivirus (APMV).